The primary structure comprises 252 residues: Aspartate/glutamate leucyltransferase (252 aa).

This sequence belongs to the R-transferase family. Bpt subfamily.

Its subcellular location is the cytoplasm. The enzyme catalyses N-terminal L-glutamyl-[protein] + L-leucyl-tRNA(Leu) = N-terminal L-leucyl-L-glutamyl-[protein] + tRNA(Leu) + H(+). It catalyses the reaction N-terminal L-aspartyl-[protein] + L-leucyl-tRNA(Leu) = N-terminal L-leucyl-L-aspartyl-[protein] + tRNA(Leu) + H(+). In terms of biological role, functions in the N-end rule pathway of protein degradation where it conjugates Leu from its aminoacyl-tRNA to the N-termini of proteins containing an N-terminal aspartate or glutamate. This is Aspartate/glutamate leucyltransferase from Hyphomonas neptunium (strain ATCC 15444).